A 505-amino-acid polypeptide reads, in one-letter code: Glucose-6-phosphate 1-dehydrogenase (505 aa).

Residue S2 is modified to N-acetylserine. NADP(+) is bound by residues 18 to 25 (GASGDLAK) and R52. Phosphoserine is present on S142. The residue at position 145 (Y145) is a Phosphotyrosine. K157 serves as a coordination point for NADP(+). Residues K157, 187-191 (HYLGK), E225, and D244 contribute to the D-glucose 6-phosphate site. The active-site Proton acceptor is H249. R340 is a binding site for NADP(+). Residue K343 participates in D-glucose 6-phosphate binding. K349, R353, and R375 together coordinate NADP(+). Q377 is a binding site for D-glucose 6-phosphate. NADP(+)-binding positions include 383–385 (YLK) and R470.

This sequence belongs to the glucose-6-phosphate dehydrogenase family.

It carries out the reaction D-glucose 6-phosphate + NADP(+) = 6-phospho-D-glucono-1,5-lactone + NADPH + H(+). The protein operates within carbohydrate degradation; pentose phosphate pathway; D-ribulose 5-phosphate from D-glucose 6-phosphate (oxidative stage): step 1/3. Functionally, catalyzes the rate-limiting step of the oxidative pentose-phosphate pathway, which represents a route for the dissimilation of carbohydrates besides glycolysis. The main function of this enzyme is to provide reducing power (NADPH) and pentose phosphates for fatty acid and nucleic acid synthesis. This is Glucose-6-phosphate 1-dehydrogenase (ZWF1) from Saccharomyces cerevisiae (strain ATCC 204508 / S288c) (Baker's yeast).